The sequence spans 469 residues: Glutamine synthetase (469 aa).

In terms of domain architecture, GS beta-grasp spans 13-97; the sequence is NEVKFVDLRF…IRCDILEPAT (85 aa). The 365-residue stretch at 105–469 folds into the GS catalytic domain; sequence PRSIAKRAEE…PLEFELYYSV (365 aa). Mg(2+) is bound by residues Glu-130 and Glu-132. Glu-208 lines the ATP pocket. The Mg(2+) site is built by Glu-213 and Glu-221. Residues 265–266 and Gly-266 each bind L-glutamate; that span reads NG. A Mg(2+)-binding site is contributed by His-270. Residues 272–274 and Ser-274 each bind ATP; that span reads HQS. Positions 322, 328, and 340 each coordinate L-glutamate. ATP-binding residues include Arg-340, Arg-345, and Lys-353. Glu-358 contacts Mg(2+). Arg-360 provides a ligand contact to L-glutamate. The residue at position 398 (Tyr-398) is an O-AMP-tyrosine.

This sequence belongs to the glutamine synthetase family. Oligomer of 12 subunits arranged in the form of two hexameric ring. Mg(2+) is required as a cofactor.

It localises to the cytoplasm. The catalysed reaction is L-glutamate + NH4(+) + ATP = L-glutamine + ADP + phosphate + H(+). The activity of this enzyme could be controlled by adenylation under conditions of abundant glutamine. Functionally, catalyzes the ATP-dependent biosynthesis of glutamine from glutamate and ammonia. The protein is Glutamine synthetase (glnAv) of Vibrio cholerae serotype O1 (strain ATCC 39315 / El Tor Inaba N16961).